The following is a 1606-amino-acid chain: Pentafunctional AROM polypeptide (1606 aa).

The interval 1-390 is 3-dehydroquinate synthase; sequence MANADVLKVS…YEPKATVVPD (390 aa). Residues 45-47, 85-88, 116-118, and D121 each bind NAD(+); these read DTN, ETSK, and GGV. R132 is a 7-phospho-2-dehydro-3-deoxy-D-arabino-heptonate binding site. 141–142 is an NAD(+) binding site; it reads TT. Residues D148 and K154 each contribute to the 7-phospho-2-dehydro-3-deoxy-D-arabino-heptonate site. An NAD(+)-binding site is contributed by K163. N164 is a binding site for 7-phospho-2-dehydro-3-deoxy-D-arabino-heptonate. NAD(+) is bound by residues 181–184 and N192; that span reads FLET. Zn(2+) is bound at residue E196. 7-phospho-2-dehydro-3-deoxy-D-arabino-heptonate contacts are provided by residues 196–199 and K256; that span reads EVVK. The active-site Proton acceptor; for 3-dehydroquinate synthase activity is the E266. Residues 270–274 and H277 contribute to the 7-phospho-2-dehydro-3-deoxy-D-arabino-heptonate site; that span reads RNLVN. Zn(2+) is bound at residue H277. H281 serves as the catalytic Proton acceptor; for 3-dehydroquinate synthase activity. Positions 293 and 362 each coordinate 7-phospho-2-dehydro-3-deoxy-D-arabino-heptonate. H293 provides a ligand contact to Zn(2+). The EPSP synthase stretch occupies residues 403–850; sequence VIPGVPRHHP…WDDLENKIGL (448 aa). The active-site For EPSP synthase activity is the C832. The tract at residues 875-1070 is shikimate kinase; it reads AASIILIGMR…TSGRRSYFLC (196 aa). Residue 882-889 participates in ATP binding; that stretch reads GMRGTGKT. The tract at residues 1071-1296 is 3-dehydroquinase; sequence LTYPDVTQSF…AAPGQLSFKQ (226 aa). The active-site Proton acceptor; for 3-dehydroquinate dehydratase activity is the H1198. K1226 (schiff-base intermediate with substrate; for 3-dehydroquinate dehydratase activity) is an active-site residue. Positions 1309–1606 are shikimate dehydrogenase; sequence AQRFYLFGTP…QFVFEEECES (298 aa).

This sequence in the N-terminal section; belongs to the sugar phosphate cyclases superfamily. Dehydroquinate synthase family. The protein in the 2nd section; belongs to the EPSP synthase family. In the 3rd section; belongs to the shikimate kinase family. It in the 4th section; belongs to the type-I 3-dehydroquinase family. This sequence in the C-terminal section; belongs to the shikimate dehydrogenase family. As to quaternary structure, homodimer. It depends on Zn(2+) as a cofactor.

It localises to the cytoplasm. It catalyses the reaction 7-phospho-2-dehydro-3-deoxy-D-arabino-heptonate = 3-dehydroquinate + phosphate. It carries out the reaction 3-dehydroquinate = 3-dehydroshikimate + H2O. The catalysed reaction is shikimate + NADP(+) = 3-dehydroshikimate + NADPH + H(+). The enzyme catalyses shikimate + ATP = 3-phosphoshikimate + ADP + H(+). It catalyses the reaction 3-phosphoshikimate + phosphoenolpyruvate = 5-O-(1-carboxyvinyl)-3-phosphoshikimate + phosphate. The protein operates within metabolic intermediate biosynthesis; chorismate biosynthesis; chorismate from D-erythrose 4-phosphate and phosphoenolpyruvate: step 2/7. It functions in the pathway metabolic intermediate biosynthesis; chorismate biosynthesis; chorismate from D-erythrose 4-phosphate and phosphoenolpyruvate: step 3/7. Its pathway is metabolic intermediate biosynthesis; chorismate biosynthesis; chorismate from D-erythrose 4-phosphate and phosphoenolpyruvate: step 4/7. It participates in metabolic intermediate biosynthesis; chorismate biosynthesis; chorismate from D-erythrose 4-phosphate and phosphoenolpyruvate: step 5/7. The protein operates within metabolic intermediate biosynthesis; chorismate biosynthesis; chorismate from D-erythrose 4-phosphate and phosphoenolpyruvate: step 6/7. In terms of biological role, the AROM polypeptide catalyzes 5 consecutive enzymatic reactions in prechorismate polyaromatic amino acid biosynthesis. The protein is Pentafunctional AROM polypeptide of Laccaria bicolor (strain S238N-H82 / ATCC MYA-4686) (Bicoloured deceiver).